Here is a 383-residue protein sequence, read N- to C-terminus: Pleckstrin homology domain-containing family A member 1 (383 aa).

2 PH domains span residues 7-112 and 191-289; these read QNRI…KAIK and AVIK…GAIV. The residue at position 284 (valine 284) is a Phosphoserine. Positions 362–383 are disordered; sequence LPRSSQGTSRSRLSLQESQLPK. Positions 370–383 are enriched in low complexity; that stretch reads SRSRLSLQESQLPK.

As to quaternary structure, interacts with MPDZ and PTPN13.

It localises to the cytoplasm. The protein resides in the cell membrane. The protein localises to the nucleus. In terms of biological role, binds specifically to phosphatidylinositol 3,4-diphosphate (PtdIns3,4P2), but not to other phosphoinositides. May recruit other proteins to the plasma membrane. The polypeptide is Pleckstrin homology domain-containing family A member 1 (Plekha1) (Mus musculus (Mouse)).